Consider the following 320-residue polypeptide: Ubiquitin-like domain-containing CTD phosphatase 1 (320 aa).

Residues 6 to 77 (VVVIVKWSGK…LKPNFKLMMV (72 aa)) form the Ubiquitin-like domain. One can recognise an FCP1 homology domain in the interval 136–296 (PREGKKLLVL…LKLSDYLRKI (161 aa)). Mg(2+)-binding residues include Asp-146, Asp-148, and Asp-255.

The cofactor is Mg(2+).

Its subcellular location is the nucleus. The catalysed reaction is O-phospho-L-seryl-[protein] + H2O = L-seryl-[protein] + phosphate. It carries out the reaction O-phospho-L-threonyl-[protein] + H2O = L-threonyl-[protein] + phosphate. Functionally, dephosphorylates 26S nuclear proteasomes, thereby decreasing their proteolytic activity. Recruited to the 19S regulatory particle of the 26S proteasome where it dephosphorylates 19S component Rpt1 which impairs Rpt1 ATPase activity and disrupts 26S proteasome assembly. The polypeptide is Ubiquitin-like domain-containing CTD phosphatase 1 (Drosophila melanogaster (Fruit fly)).